Consider the following 567-residue polypeptide: 25S rRNA (cytosine-C(5))-methyltransferase NSUN5 (567 aa).

Basic residues predominate over residues 1 to 17 (MVARRNKPKAPLVKHRF). The disordered stretch occupies residues 1 to 88 (MVARRNKPKA…KTPPATKQKF (88 aa)). Residues 312-318 (CSAPGNK), Glu-336, Asp-363, and Asp-383 each bind S-adenosyl-L-methionine. The active-site Nucleophile is Cys-444.

Belongs to the class I-like SAM-binding methyltransferase superfamily. RsmB/NOP family.

The catalysed reaction is a cytidine in 25S rRNA + S-adenosyl-L-methionine = a 5-methylcytidine in 25S rRNA + S-adenosyl-L-homocysteine + H(+). S-adenosyl-L-methionine-dependent methyltransferase that specifically methylates the C(5) position of cytosine 2268 (m5C2268) in 25S rRNA. In Arabidopsis thaliana (Mouse-ear cress), this protein is 25S rRNA (cytosine-C(5))-methyltransferase NSUN5.